The chain runs to 342 residues: uncharacterized protein (342 aa).

An N-terminal signal peptide occupies residues 1-18; the sequence is MWKKLMLLLLMAIPLVSA.

This is an uncharacterized protein from Methanocaldococcus jannaschii (strain ATCC 43067 / DSM 2661 / JAL-1 / JCM 10045 / NBRC 100440) (Methanococcus jannaschii).